A 131-amino-acid polypeptide reads, in one-letter code: Small ribosomal subunit protein bS6 (131 aa).

The segment at 96-131 (VTEASPMVKAKDERRERRDDFANETADDAEAGDSEE) is disordered. Positions 104 to 116 (KAKDERRERRDDF) are enriched in basic and acidic residues. The span at 120–131 (TADDAEAGDSEE) shows a compositional bias: acidic residues.

Belongs to the bacterial ribosomal protein bS6 family.

In terms of biological role, binds together with bS18 to 16S ribosomal RNA. This is Small ribosomal subunit protein bS6 from Salmonella arizonae (strain ATCC BAA-731 / CDC346-86 / RSK2980).